We begin with the raw amino-acid sequence, 313 residues long: Caffeic acid 3-O-methyltransferase (313 aa).

Residue 112–118 (IDQDRVF) participates in substrate binding. The tract at residues 144–162 (AFDYPGTDPRFNKIFNRAM) is substrate binding. Positions 190, 213, 233, 234, and 247 each coordinate S-adenosyl-L-methionine. Residue His-251 is the Proton acceptor of the active site.

The protein belongs to the class I-like SAM-binding methyltransferase superfamily. Cation-independent O-methyltransferase family. COMT subfamily. As to quaternary structure, homodimer.

It carries out the reaction (E)-caffeate + S-adenosyl-L-methionine = (E)-ferulate + S-adenosyl-L-homocysteine + H(+). It participates in aromatic compound metabolism; phenylpropanoid biosynthesis. Functionally, catalyzes the conversion of caffeic acid to ferulic acid and of 5-hydroxyferulic acid to sinapic acid. The resulting products may subsequently be converted to the corresponding alcohols that are incorporated into lignins. In Eucalyptus globulus (Tasmanian blue gum), this protein is Caffeic acid 3-O-methyltransferase (COMT1).